The following is a 429-amino-acid chain: Glutamate-1-semialdehyde 2,1-aminomutase 2 (429 aa).

The residue at position 267 (lysine 267) is an N6-(pyridoxal phosphate)lysine.

The protein belongs to the class-III pyridoxal-phosphate-dependent aminotransferase family. HemL subfamily. As to quaternary structure, homodimer. Requires pyridoxal 5'-phosphate as cofactor.

The protein localises to the cytoplasm. It carries out the reaction (S)-4-amino-5-oxopentanoate = 5-aminolevulinate. It participates in porphyrin-containing compound metabolism; protoporphyrin-IX biosynthesis; 5-aminolevulinate from L-glutamyl-tRNA(Glu): step 2/2. In Bacillus subtilis (strain 168), this protein is Glutamate-1-semialdehyde 2,1-aminomutase 2 (gsaB).